Reading from the N-terminus, the 124-residue chain is Small ribosomal subunit protein uS12 (124 aa).

Asp89 is subject to 3-methylthioaspartic acid.

It belongs to the universal ribosomal protein uS12 family. In terms of assembly, part of the 30S ribosomal subunit. Contacts proteins S8 and S17. May interact with IF1 in the 30S initiation complex.

Its function is as follows. With S4 and S5 plays an important role in translational accuracy. In terms of biological role, interacts with and stabilizes bases of the 16S rRNA that are involved in tRNA selection in the A site and with the mRNA backbone. Located at the interface of the 30S and 50S subunits, it traverses the body of the 30S subunit contacting proteins on the other side and probably holding the rRNA structure together. The combined cluster of proteins S8, S12 and S17 appears to hold together the shoulder and platform of the 30S subunit. This chain is Small ribosomal subunit protein uS12, found in Acinetobacter baylyi (strain ATCC 33305 / BD413 / ADP1).